The sequence spans 459 residues: uncharacterized protein (459 aa).

Positions Lys-9–Lys-67 constitute a TRAM domain. [4Fe-4S] cluster contacts are provided by Cys-80, Cys-86, Cys-89, and Cys-168. The S-adenosyl-L-methionine site is built by Gln-292, Tyr-321, Asp-342, and Asp-390. The Nucleophile role is filled by Cys-417.

This sequence belongs to the class I-like SAM-binding methyltransferase superfamily. RNA M5U methyltransferase family.

This is an uncharacterized protein from Bacillus anthracis.